A 297-amino-acid chain; its full sequence is Protoheme IX farnesyltransferase (297 aa).

A run of 9 helical transmembrane segments spans residues 26–46 (VTQLAVFCAVIGMFLATPGMV), 48–68 (YPVLFGGIAGIWLLAGAAFAV), 96–116 (FHIIIFSIILGSLGMIILWNF), 120–140 (LTMWLTLATFVGYAVIYTWLL), 147–167 (NIVIGGLSGAMPPALGWAAVT), 174–194 (AWLLVLIIFVWTPPHFWALAL), 218–238 (LLNILLYTLILIAATLLPYIY), 243–263 (IIYLISAIVLGLMFLAYVIAL), and 276–296 (FRFSITYLSLLFAALLIDHYF).

This sequence belongs to the UbiA prenyltransferase family. Protoheme IX farnesyltransferase subfamily.

It localises to the cell membrane. It carries out the reaction heme b + (2E,6E)-farnesyl diphosphate + H2O = Fe(II)-heme o + diphosphate. The protein operates within porphyrin-containing compound metabolism; heme O biosynthesis; heme O from protoheme: step 1/1. In terms of biological role, converts heme B (protoheme IX) to heme O by substitution of the vinyl group on carbon 2 of heme B porphyrin ring with a hydroxyethyl farnesyl side group. The polypeptide is Protoheme IX farnesyltransferase (Polynucleobacter asymbioticus (strain DSM 18221 / CIP 109841 / QLW-P1DMWA-1) (Polynucleobacter necessarius subsp. asymbioticus)).